Here is a 360-residue protein sequence, read N- to C-terminus: Phosphoserine aminotransferase (360 aa).

An L-glutamate-binding site is contributed by arginine 42. Pyridoxal 5'-phosphate is bound by residues 76-77 (AS), tryptophan 102, threonine 152, aspartate 171, and glutamine 194. At lysine 195 the chain carries N6-(pyridoxal phosphate)lysine. 236 to 237 (NT) is a binding site for pyridoxal 5'-phosphate.

It belongs to the class-V pyridoxal-phosphate-dependent aminotransferase family. SerC subfamily. Homodimer. It depends on pyridoxal 5'-phosphate as a cofactor.

Its subcellular location is the cytoplasm. The enzyme catalyses O-phospho-L-serine + 2-oxoglutarate = 3-phosphooxypyruvate + L-glutamate. The catalysed reaction is 4-(phosphooxy)-L-threonine + 2-oxoglutarate = (R)-3-hydroxy-2-oxo-4-phosphooxybutanoate + L-glutamate. It functions in the pathway amino-acid biosynthesis; L-serine biosynthesis; L-serine from 3-phospho-D-glycerate: step 2/3. In terms of biological role, catalyzes the reversible conversion of 3-phosphohydroxypyruvate to phosphoserine and of 3-hydroxy-2-oxo-4-phosphonooxybutanoate to phosphohydroxythreonine. This chain is Phosphoserine aminotransferase, found in Geobacillus kaustophilus (strain HTA426).